The following is a 280-amino-acid chain: Diaminopimelate epimerase (280 aa).

Residues asparagine 11 and asparagine 62 each contribute to the substrate site. The Proton donor role is filled by cysteine 71. Residues 72 to 73 (GN), asparagine 160, asparagine 193, and 211 to 212 (ER) each bind substrate. The Proton acceptor role is filled by cysteine 220. 221–222 (GT) is a substrate binding site.

Belongs to the diaminopimelate epimerase family. As to quaternary structure, homodimer.

The protein localises to the cytoplasm. It carries out the reaction (2S,6S)-2,6-diaminopimelate = meso-2,6-diaminopimelate. The protein operates within amino-acid biosynthesis; L-lysine biosynthesis via DAP pathway; DL-2,6-diaminopimelate from LL-2,6-diaminopimelate: step 1/1. Functionally, catalyzes the stereoinversion of LL-2,6-diaminopimelate (L,L-DAP) to meso-diaminopimelate (meso-DAP), a precursor of L-lysine and an essential component of the bacterial peptidoglycan. The sequence is that of Diaminopimelate epimerase from Acetivibrio thermocellus (strain ATCC 27405 / DSM 1237 / JCM 9322 / NBRC 103400 / NCIMB 10682 / NRRL B-4536 / VPI 7372) (Clostridium thermocellum).